Here is a 2063-residue protein sequence, read N- to C-terminus: MADGAPRPQLYRSVSFKLLERWSGGPGLREEDTDTPGLRRRASCRPTTAARGQPSRRVSKLASGPLAAPAQPRPLRSLSPSVRQLSRRFDAPRLDDGSAGTRDGGVLPAAAEEAAEGPARGAWPSVTEMRKLFGGPGSRRPSADSESPGTPSPDGAAWEPPARESRQPPTPPPRTCFPLAGLRSARPLTGPETEGRLRRPQQQQERAQRPADGLHSWHIFSQPQAGARASCSSSSIAASYPVSRSRAASSSEEEEEGPPQLPGAQSPAYHGGHSSGSDDDRDGEGGHRWGGRPGLRPGSSLLDQDCRPDSDGLNLSSMNSAGVSGSPEPPTSPRAPREEGLREWGSGSPPCVPGPQEGLRPMSDSVGGAFRVAKVSFPSYLASPAGSRGSSRYSSTETLKDDDLWSSRGSGGWGVYRSPSFGAGEGLLRSQARTRAKGPGGTSRALRDGGFEPEKSRQRKSLSNPDIASETLTLLSFLRSDLSELRVRKPGGSSGDRGSNPLDGRDSPSAGGPVGQLEPIPIPAPASPGTRPTLKDLTATLRRAKSFTCSEKPMARRLPRTSALKSSSSELLLTGPGAEEDPLPLIVQDQYVQEARQVFEKIQRMGAQQDDGSDAPPGSPDWAGDVTRGQRSQEELSGPESSLTDEGIGADPEPPVAAFCGLGTTGMWRPLSSSSAQTNHHGPGTEDSLGGWALVSPETPPTPGALRRRRKVPPSGSGGSELSNGEAGEAYRSLSDPIPQRHRAATSEEPTGFSVDSNLLGSLSPKTGLPATSAMDEGLTSGHSDWSVGSEESKGYQEVIQSIVQGPGTLGRVVDDRIAGKAPKKKSLSDPSRRGELAGPGFEGPGGEPIREVEPMLPPSSSEPILVEQRAEPEEPGATRSRAQSERALPEALPPPATAHRNFHLDPKLADILSPRLIRRGSKKRPARSSHQELRRDEGSQDQTGSLSRARPSSRHVRHASVPATFMPIVVPEPPTSVGPPVAVPEPIGFPTRAHPTLQAPSLEDVTKQYMLNLHSGEVPAPVPVDMPCLPLAAPPSAEAKPPEAARPADEPTPASKCCSKPQVDMRKHVAMTLLDTEQSYVESLRTLMQGYMQPLKQPENSVLCDPSLVDEIFDQIPELLEHHEQFLEQVRHCMQTWHAQQKVGALLVQSFSKDVLVNIYSAYIDNFLNAKDAVRVAKEARPAFLKFLEQSMRENKEKQALSDLMIKPVQRIPRYELLVKDLLKHTPEDHPDHPLLLEAQRNIKQVAERINKGVRSAEEAERHARVLQEIEAHIEGMEDLQAPLRRFLRQEMVIEVKAIGGKKDRSLFLFTDLIVCTTLKRKSGSLRRSSMSLYTAASVIDTASKYKMLWKLPLEDADIIKGASQATNRENIQKAISRLDEDLTTLGQMSKLSESLGFPHQSLDDALRDLSAAMHRDLSEKQALCYALSFPPTKLELCATRPEGTDSYIFEFPHPDARLGFEQAFDEAKRKLASSKSCLDPEFLKAIPIMKTRSGMQFSCAAPTLNSCPEPSPEVWVCNSDGYVGQVCLLSLRAEPDVEACIAVCSARILCIGAVPGLQPRCHREPPPSLRSPPETAPEPAGPELDVEAAADEEAATLAEPGPQPCLHISIAGSGLEMTPGLGEGDPRPELVPFDSDSDDESSPSPSGTLQSQASRSTISSSFGNEETPSSKEATAETTSSEEEQEPGFLPLSGSFGPGGPCGTSPMDGRALRRSSHGSFTRGSLEDLLSVDPEAYQSSVWLGTEDGCVHVYQSSDSIRDRRNSMKLQHAASVTCILYLNNQVFVSLANGELVVYQREAGHFWDPQNFKSVTLGTQGSPITKMVSVGGRLWCGCQNRVLVLSPDTLQLEHMFYVGQDSSRCVACMVDSSLGVWVTLKGSAHVCLYHPDTFEQLAEVDVTPPVHRMLAGSDAIIRQHKAACLRITALLVCEELLWVGTSAGVVLTMPTSPGTVSCPRAPLSPTGLGQGHTGHVRFLAAVQLPDGFNLLCPTPPPPPDTGPEKLPSLEHRDSPWHRGPAPARPKMLVISGGDGYEDFRLSSGGGSSSETVGRDDSTNHLLLWRV.

Disordered stretches follow at residues 22 to 365 (WSGG…MSDS), 380 to 466 (YLAS…SNPD), 485 to 581 (LRVR…AEED), and 602 to 958 (IQRM…RHVR). The span at 65–76 (PLAAPAQPRPLR) shows a compositional bias: low complexity. A compositionally biased stretch (basic and acidic residues) spans 87-96 (RRFDAPRLDD). Positions 108–122 (PAAAEEAAEGPARGA) are enriched in low complexity. Residues Ser-142 and Ser-152 each carry the phosphoserine modification. The segment covering 225–250 (AGARASCSSSSIAASYPVSRSRAASS) has biased composition (low complexity). Ser-310 bears the Phosphoserine mark. Over residues 313 to 323 (LNLSSMNSAGV) the composition is skewed to polar residues. Ser-326, Ser-332, Ser-383, Ser-387, Ser-395, Ser-410, and Ser-420 each carry phosphoserine. A compositionally biased stretch (polar residues) spans 388 to 397 (RGSSRYSSTE). Over residues 445-456 (ALRDGGFEPEKS) the composition is skewed to basic and acidic residues. 2 positions are modified to phosphoserine: Ser-461 and Ser-546. Positions 562 to 573 (SALKSSSSELLL) are enriched in low complexity. A Phosphoserine modification is found at Ser-619. The span at 671–680 (LSSSSAQTNH) shows a compositional bias: polar residues. Ser-696 is modified (phosphoserine). Phosphothreonine occurs at positions 699 and 702. Ser-735 bears the Phosphoserine mark. Residues 754–765 (SVDSNLLGSLSP) are compositionally biased toward polar residues. A compositionally biased stretch (basic and acidic residues) spans 827-836 (SLSDPSRRGE). Ser-914 bears the Phosphoserine mark. Residues 917–928 (LIRRGSKKRPAR) show a composition bias toward basic residues. Over residues 930–939 (SHQELRRDEG) the composition is skewed to basic and acidic residues. Ser-961 and Ser-1002 each carry phosphoserine. The interval 1034-1060 (APPSAEAKPPEAARPADEPTPASKCCS) is disordered. Over residues 1041–1050 (KPPEAARPAD) the composition is skewed to basic and acidic residues. The 189-residue stretch at 1066–1254 (MRKHVAMTLL…KQVAERINKG (189 aa)) folds into the DH domain. Ser-1331 bears the Phosphoserine mark. Disordered regions lie at residues 1564–1584 (HREPPPSLRSPPETAPEPAGP), 1616–1719 (GLEM…SSHG), 1991–2020 (TPPPPPDTGPEKLPSLEHRDSPWHRGPAPA), and 2036–2055 (FRLSSGGGSSSETVGRDDST). Positions 1568–1582 (PPSLRSPPETAPEPA) are enriched in pro residues. Residues 1644 to 1680 (SPSPSGTLQSQASRSTISSSFGNEETPSSKEATAETT) are compositionally biased toward low complexity. Basic and acidic residues predominate over residues 2004 to 2013 (PSLEHRDSPW).

Highly expressed in the heart.

In terms of biological role, acts as a guanine nucleotide exchange factor (GEF) for RhoA GTPases. This Homo sapiens (Human) protein is Rho guanine nucleotide exchange factor 17 (ARHGEF17).